The primary structure comprises 2464 residues: Highly reducing polyketide synthase xilA (2464 aa).

A Ketosynthase family 3 (KS3) domain is found at 9–437 (HDPIALVGIG…GTNGHCIIDH (429 aa)). Residues Cys-182, His-318, and His-360 each act as for beta-ketoacyl synthase activity in the active site. Low complexity predominate over residues 461–487 (QNGINGTNGTNGTNGTNGTNGTNGTNG). The segment at 461 to 495 (QNGINGTNGTNGTNGTNGTNGTNGTNGHHNPKTEA) is disordered. Positions 589–911 (FIFTGQGAQW…LKRNEDAQRL (323 aa)) constitute a Malonyl-CoA:ACP transacylase (MAT) domain. Positions 983 to 1121 (HDLLGSKVPG…GQIKIEVSTF (139 aa)) are N-terminal hotdog fold. The PKS/mFAS DH domain maps to 983–1286 (HDLLGSKVPG…FTSLNNEQES (304 aa)). His-1015 acts as the Proton acceptor; for dehydratase activity in catalysis. A C-terminal hotdog fold region spans residues 1133–1286 (GRLVDAQTWY…FTSLNNEQES (154 aa)). Asp-1199 acts as the Proton donor; for dehydratase activity in catalysis. The methyltransferase (CMeT) domain stretch occupies residues 1282–1490 (NEQESTSTGD…TEPAHHSTIT (209 aa)). Positions 1716 to 2028 (GILTSLYFKP…KGTHIGKMVI (313 aa)) constitute an Enoyl reductase (ER) domain. The Ketoreductase (KR) domain occupies 2052-2231 (ANYILVGGMS…ATTVSLGFIN (180 aa)). Residues 2383–2461 (ETVTFVTDAI…SIAQVIVEEA (79 aa)) form the Carrier domain. Ser-2420 is modified (O-(pantetheine 4'-phosphoryl)serine).

It depends on pantetheine 4'-phosphate as a cofactor.

It functions in the pathway secondary metabolite biosynthesis. Highly reducing polyketide synthase; part of the gene cluster that mediates the biosynthesis of the 6-methyl-2-pyrone derivative xylariolide D. XilA produces the 5-alkyl-6-methyl-2-pyrone backbone called prexylariolide D via sequential condensations of 4 malonyl-CoA units with one acetyl-CoA starter unit. During the biosynthesis, the linear polyketide chain is branched by the addition of an acetyl unit as the origin of the methyl group at the 2-pyrone ring. Prexylariolide D is then hydroxylated at the side chain by xilC to form the final product, xylariolide D. The polypeptide is Highly reducing polyketide synthase xilA (Penicillium rubens (strain ATCC 28089 / DSM 1075 / NRRL 1951 / Wisconsin 54-1255) (Penicillium chrysogenum)).